A 190-amino-acid polypeptide reads, in one-letter code: Large ribosomal subunit protein bL25 (190 aa).

The protein belongs to the bacterial ribosomal protein bL25 family. CTC subfamily. As to quaternary structure, part of the 50S ribosomal subunit; part of the 5S rRNA/L5/L18/L25 subcomplex. Contacts the 5S rRNA. Binds to the 5S rRNA independently of L5 and L18.

This is one of the proteins that binds to the 5S RNA in the ribosome where it forms part of the central protuberance. The chain is Large ribosomal subunit protein bL25 from Neisseria meningitidis serogroup C / serotype 2a (strain ATCC 700532 / DSM 15464 / FAM18).